We begin with the raw amino-acid sequence, 108 residues long: Small ribosomal subunit protein eS25A (108 aa).

The segment covering methionine 1 to glycine 20 has biased composition (low complexity). Positions methionine 1–lysine 30 are disordered. Residue proline 2 is modified to N,N-dimethylproline; by NTM1. Basic residues predominate over residues lysine 21–lysine 30.

The protein belongs to the eukaryotic ribosomal protein eS25 family. As to quaternary structure, component of the small ribosomal subunit (SSU). Mature yeast ribosomes consist of a small (40S) and a large (60S) subunit. The 40S small subunit contains 1 molecule of ribosomal RNA (18S rRNA) and 33 different proteins (encoded by 57 genes). The large 60S subunit contains 3 rRNA molecules (25S, 5.8S and 5S rRNA) and 46 different proteins (encoded by 81 genes).

It localises to the cytoplasm. Component of the ribosome, a large ribonucleoprotein complex responsible for the synthesis of proteins in the cell. The small ribosomal subunit (SSU) binds messenger RNAs (mRNAs) and translates the encoded message by selecting cognate aminoacyl-transfer RNA (tRNA) molecules. The large subunit (LSU) contains the ribosomal catalytic site termed the peptidyl transferase center (PTC), which catalyzes the formation of peptide bonds, thereby polymerizing the amino acids delivered by tRNAs into a polypeptide chain. The nascent polypeptides leave the ribosome through a tunnel in the LSU and interact with protein factors that function in enzymatic processing, targeting, and the membrane insertion of nascent chains at the exit of the ribosomal tunnel. This chain is Small ribosomal subunit protein eS25A, found in Saccharomyces cerevisiae (strain ATCC 204508 / S288c) (Baker's yeast).